The primary structure comprises 296 residues: Ribosomal protein L11 methyltransferase (296 aa).

Residues Thr145, Gly166, Asp188, and Asn230 each coordinate S-adenosyl-L-methionine.

This sequence belongs to the methyltransferase superfamily. PrmA family.

The protein resides in the cytoplasm. It catalyses the reaction L-lysyl-[protein] + 3 S-adenosyl-L-methionine = N(6),N(6),N(6)-trimethyl-L-lysyl-[protein] + 3 S-adenosyl-L-homocysteine + 3 H(+). Methylates ribosomal protein L11. This is Ribosomal protein L11 methyltransferase from Photorhabdus laumondii subsp. laumondii (strain DSM 15139 / CIP 105565 / TT01) (Photorhabdus luminescens subsp. laumondii).